The sequence spans 232 residues: Ribonuclease 3 (232 aa).

Residues 5–134 (QTVLKNHFAI…FLGALLLDKD (130 aa)) form the RNase III domain. Glu-47 contributes to the Mg(2+) binding site. The active site involves Asp-51. Asp-120 and Glu-123 together coordinate Mg(2+). Residue Glu-123 is part of the active site. The region spanning 160 to 229 (DYKTHLQELL…AKNAVEKGLD (70 aa)) is the DRBM domain.

This sequence belongs to the ribonuclease III family. Homodimer. Mg(2+) is required as a cofactor.

It localises to the cytoplasm. It catalyses the reaction Endonucleolytic cleavage to 5'-phosphomonoester.. In terms of biological role, digests double-stranded RNA. Involved in the processing of primary rRNA transcript to yield the immediate precursors to the large and small rRNAs (23S and 16S). Processes some mRNAs, and tRNAs when they are encoded in the rRNA operon. Processes pre-crRNA and tracrRNA of type II CRISPR loci if present in the organism. This is Ribonuclease 3 from Streptococcus pneumoniae (strain Hungary19A-6).